Reading from the N-terminus, the 384-residue chain is S-adenosylmethionine synthase (384 aa).

ATP is bound at residue His-15. Asp-17 contacts Mg(2+). Residue Glu-43 coordinates K(+). Residues Glu-56 and Gln-99 each coordinate L-methionine. The segment at 99–109 (QSPDINQGVDR) is flexible loop. Residues 164–166 (DAK), 230–231 (RF), Asp-239, 245–246 (RK), Ala-262, and Lys-266 each bind ATP. Asp-239 provides a ligand contact to L-methionine. L-methionine is bound at residue Lys-270.

The protein belongs to the AdoMet synthase family. Homotetramer; dimer of dimers. It depends on Mg(2+) as a cofactor. Requires K(+) as cofactor.

The protein resides in the cytoplasm. The catalysed reaction is L-methionine + ATP + H2O = S-adenosyl-L-methionine + phosphate + diphosphate. Its pathway is amino-acid biosynthesis; S-adenosyl-L-methionine biosynthesis; S-adenosyl-L-methionine from L-methionine: step 1/1. Catalyzes the formation of S-adenosylmethionine (AdoMet) from methionine and ATP. The overall synthetic reaction is composed of two sequential steps, AdoMet formation and the subsequent tripolyphosphate hydrolysis which occurs prior to release of AdoMet from the enzyme. This is S-adenosylmethionine synthase from Yersinia pseudotuberculosis serotype IB (strain PB1/+).